A 59-amino-acid chain; its full sequence is Large ribosomal subunit protein uL30 (59 aa).

This sequence belongs to the universal ribosomal protein uL30 family. Part of the 50S ribosomal subunit.

The polypeptide is Large ribosomal subunit protein uL30 (Staphylococcus aureus (strain JH1)).